Consider the following 318-residue polypeptide: Nucleotide-binding protein Lcho_3490 (318 aa).

35–42 (GISGGGKS) serves as a coordination point for ATP. Residue 84 to 87 (DVRN) coordinates GTP.

This sequence belongs to the RapZ-like family.

Its function is as follows. Displays ATPase and GTPase activities. The sequence is that of Nucleotide-binding protein Lcho_3490 from Leptothrix cholodnii (strain ATCC 51168 / LMG 8142 / SP-6) (Leptothrix discophora (strain SP-6)).